The following is a 223-amino-acid chain: Endonuclease V (223 aa).

Mg(2+) contacts are provided by D45 and D113.

The protein belongs to the endonuclease V family. It depends on Mg(2+) as a cofactor.

The protein resides in the cytoplasm. It carries out the reaction Endonucleolytic cleavage at apurinic or apyrimidinic sites to products with a 5'-phosphate.. DNA repair enzyme involved in the repair of deaminated bases. Selectively cleaves double-stranded DNA at the second phosphodiester bond 3' to a deoxyinosine leaving behind the intact lesion on the nicked DNA. The protein is Endonuclease V of Dehalococcoides mccartyi (strain CBDB1).